Here is a 503-residue protein sequence, read N- to C-terminus: Aromatase (503 aa).

3 helical membrane-spanning segments follow: residues 19–39 (EVAP…LLVW), 51–71 (GYFL…MGIG), and 303–323 (MLIA…FLIA). D309 and M374 together coordinate substrate. C437 is a binding site for heme.

It belongs to the cytochrome P450 family. Requires heme as cofactor.

It is found in the endoplasmic reticulum membrane. Its subcellular location is the microsome membrane. The enzyme catalyses testosterone + 3 reduced [NADPH--hemoprotein reductase] + 3 O2 = 17beta-estradiol + formate + 3 oxidized [NADPH--hemoprotein reductase] + 4 H2O + 4 H(+). It catalyses the reaction androst-4-ene-3,17-dione + 3 reduced [NADPH--hemoprotein reductase] + 3 O2 = estrone + formate + 3 oxidized [NADPH--hemoprotein reductase] + 4 H2O + 4 H(+). It carries out the reaction androst-4-ene-3,17-dione + reduced [NADPH--hemoprotein reductase] + O2 = 19-hydroxyandrost-4-ene-3,17-dione + oxidized [NADPH--hemoprotein reductase] + H2O + H(+). The catalysed reaction is 19-hydroxyandrost-4-ene-3,17-dione + reduced [NADPH--hemoprotein reductase] + O2 = 19-oxo-androst-4-ene-3,17-dione + oxidized [NADPH--hemoprotein reductase] + 2 H2O + H(+). The enzyme catalyses 19-oxo-androst-4-ene-3,17-dione + reduced [NADPH--hemoprotein reductase] + O2 = estrone + formate + oxidized [NADPH--hemoprotein reductase] + H2O + 2 H(+). It catalyses the reaction estrone + reduced [NADPH--hemoprotein reductase] + O2 = 2-hydroxyestrone + oxidized [NADPH--hemoprotein reductase] + H2O + H(+). It carries out the reaction 17beta-hydroxy-5alpha-androstan-3-one + reduced [NADPH--hemoprotein reductase] + O2 = 17beta,19-dihydroxy-3-oxo-5alpha-androstanone + oxidized [NADPH--hemoprotein reductase] + H2O + H(+). The catalysed reaction is 17beta,19-dihydroxy-3-oxo-5alpha-androstanone + reduced [NADPH--hemoprotein reductase] + O2 = 17beta-hydroxy-3,19-dioxo-5alpha-androstanone + oxidized [NADPH--hemoprotein reductase] + 2 H2O + H(+). The enzyme catalyses 17beta-hydroxy-3,19-dioxo-5alpha-androstanone + reduced [NADPH--hemoprotein reductase] + O2 = 17beta-hydroxy-3-oxo-19-nor-5alpha-androst-1-ene + formate + oxidized [NADPH--hemoprotein reductase] + H2O + 2 H(+). Its pathway is steroid hormone biosynthesis. A cytochrome P450 monooxygenase that catalyzes the conversion of C19 androgens, androst-4-ene-3,17-dione (androstenedione) and testosterone to the C18 estrogens, estrone and estradiol, respectively. Catalyzes three successive oxidations of C19 androgens: two conventional oxidations at C19 yielding 19-hydroxy and 19-oxo/19-aldehyde derivatives, followed by a third oxidative aromatization step that involves C1-beta hydrogen abstraction combined with cleavage of the C10-C19 bond to yield a phenolic A ring and formic acid. Alternatively, the third oxidative reaction yields a 19-norsteroid and formic acid. Converts dihydrotestosterone to delta1,10-dehydro 19-nordihydrotestosterone and may play a role in homeostasis of this potent androgen. Also displays 2-hydroxylase activity toward estrone. Mechanistically, uses molecular oxygen inserting one oxygen atom into a substrate, and reducing the second into a water molecule, with two electrons provided by NADPH via cytochrome P450 reductase (CPR; NADPH-ferrihemoprotein reductase). This Leucopleurus acutus (Atlantic white-sided dolphin) protein is Aromatase (CYP19A1).